The primary structure comprises 199 residues: GTP cyclohydrolase-2 (199 aa).

49–53 (RIHSE) serves as a coordination point for GTP. Residues C54, C65, and C67 each contribute to the Zn(2+) site. GTP is bound by residues Q70, 92–94 (EGR), and T114. The active-site Proton acceptor is D126. R128 acts as the Nucleophile in catalysis. Residues T149 and K154 each coordinate GTP. Residues 172-199 (ETGRNPHNSHYLETKRGKLGHLLEGDSE) are disordered.

This sequence belongs to the GTP cyclohydrolase II family. Zn(2+) is required as a cofactor.

It carries out the reaction GTP + 4 H2O = 2,5-diamino-6-hydroxy-4-(5-phosphoribosylamino)-pyrimidine + formate + 2 phosphate + 3 H(+). It functions in the pathway cofactor biosynthesis; riboflavin biosynthesis; 5-amino-6-(D-ribitylamino)uracil from GTP: step 1/4. Catalyzes the conversion of GTP to 2,5-diamino-6-ribosylamino-4(3H)-pyrimidinone 5'-phosphate (DARP), formate and pyrophosphate. This chain is GTP cyclohydrolase-2, found in Teredinibacter turnerae (strain ATCC 39867 / T7901).